Consider the following 474-residue polypeptide: MPGKTLYDKIWDAHVVAEQDGEAILYIDLHLIHEVTTPQAFAGLRVAGRPVRRPDRTLAVADHNVPTEGQGLGIDAVADEEARLQLQTLAKNVAEHGIEFFSMGDVRNGIVHVVGPEQGRTQPGMTIVCGDSHTSTHGAFGALAHGIGTSEVEHVLATQTLRQKKAKNMRVRIEGEPAPGVGAKDFALAVIGEIGTAGGTGYVIEYAGSAVRALSMEGRMTLCNLTIEGGAKAGLIAPDEMTYAYLQGRPAAPKGGAWEMALDYWKGFHSDEDAVFDREIVLDAAKIAPTVTWGTSPEDVVAVTGLVPSPDSFGTPDKRASAARALEYMGLTAGQPITEAKVDVVFIGSCTNSRIEDLRAAAAIVAKALEGGRKVAPGVRAMVVPGSGLVREQAEAEGLDEVFKAAGFDWREPGCSMCLGMNPDRLAPGERCASTSNRNFEGRQGRGGRTHLMSPAMAAAAAIAGHIADVREFL.

Residues Cys-350, Cys-415, and Cys-418 each contribute to the [4Fe-4S] cluster site.

The protein belongs to the aconitase/IPM isomerase family. LeuC type 1 subfamily. Heterodimer of LeuC and LeuD. The cofactor is [4Fe-4S] cluster.

The catalysed reaction is (2R,3S)-3-isopropylmalate = (2S)-2-isopropylmalate. Its pathway is amino-acid biosynthesis; L-leucine biosynthesis; L-leucine from 3-methyl-2-oxobutanoate: step 2/4. In terms of biological role, catalyzes the isomerization between 2-isopropylmalate and 3-isopropylmalate, via the formation of 2-isopropylmaleate. This is 3-isopropylmalate dehydratase large subunit from Phenylobacterium zucineum (strain HLK1).